We begin with the raw amino-acid sequence, 249 residues long: Probable transcriptional regulatory protein FN1661 (249 aa).

Polar residues predominate over residues 1–10 (MSGHSKWNNI). Positions 1–20 (MSGHSKWNNIQHRKGAQDKK) are disordered.

The protein belongs to the TACO1 family.

It localises to the cytoplasm. The chain is Probable transcriptional regulatory protein FN1661 from Fusobacterium nucleatum subsp. nucleatum (strain ATCC 25586 / DSM 15643 / BCRC 10681 / CIP 101130 / JCM 8532 / KCTC 2640 / LMG 13131 / VPI 4355).